A 200-amino-acid chain; its full sequence is Dephospho-CoA kinase (200 aa).

One can recognise a DPCK domain in the interval 3-200 (IIGLTGGIGS…LWQRFATQVE (198 aa)). Residue 11–16 (GSGKST) participates in ATP binding.

Belongs to the CoaE family.

It is found in the cytoplasm. The catalysed reaction is 3'-dephospho-CoA + ATP = ADP + CoA + H(+). It functions in the pathway cofactor biosynthesis; coenzyme A biosynthesis; CoA from (R)-pantothenate: step 5/5. Catalyzes the phosphorylation of the 3'-hydroxyl group of dephosphocoenzyme A to form coenzyme A. This is Dephospho-CoA kinase from Corynebacterium diphtheriae (strain ATCC 700971 / NCTC 13129 / Biotype gravis).